The chain runs to 161 residues: Negative cofactor 2 complex subunit beta (161 aa).

Residues 11 to 75 (SLPKATVQKM…IAAEHIIKAL (65 aa)) form the Histone-fold domain. The span at 93–107 (EHKEQQKNREKKSSK) shows a compositional bias: basic and acidic residues. 2 disordered regions span residues 93 to 116 (EHKE…VSRD) and 130 to 161 (RERF…TKEN). Polar residues predominate over residues 135 to 147 (NQNIAHDNHTTTA).

The protein belongs to the NC2 beta/DR1 family.

The protein localises to the cytoplasm. It is found in the nucleus. This Schizosaccharomyces pombe (strain 972 / ATCC 24843) (Fission yeast) protein is Negative cofactor 2 complex subunit beta (ncb2).